A 161-amino-acid chain; its full sequence is Putative 4-hydroxy-4-methyl-2-oxoglutarate aldolase (161 aa).

Substrate contacts are provided by residues 77-80 (GGNL) and arginine 99. Aspartate 100 provides a ligand contact to a divalent metal cation.

The protein belongs to the class II aldolase/RraA-like family. As to quaternary structure, homotrimer. A divalent metal cation is required as a cofactor.

It carries out the reaction 4-hydroxy-4-methyl-2-oxoglutarate = 2 pyruvate. It catalyses the reaction oxaloacetate + H(+) = pyruvate + CO2. Functionally, catalyzes the aldol cleavage of 4-hydroxy-4-methyl-2-oxoglutarate (HMG) into 2 molecules of pyruvate. Also contains a secondary oxaloacetate (OAA) decarboxylase activity due to the common pyruvate enolate transition state formed following C-C bond cleavage in the retro-aldol and decarboxylation reactions. The sequence is that of Putative 4-hydroxy-4-methyl-2-oxoglutarate aldolase from Methylococcus capsulatus (strain ATCC 33009 / NCIMB 11132 / Bath).